We begin with the raw amino-acid sequence, 1380 residues long: DNA-directed RNA polymerase subunit beta (1380 aa).

It belongs to the RNA polymerase beta chain family. In terms of assembly, the RNAP catalytic core consists of 2 alpha, 1 beta, 1 beta' and 1 omega subunit. When a sigma factor is associated with the core the holoenzyme is formed, which can initiate transcription.

The catalysed reaction is RNA(n) + a ribonucleoside 5'-triphosphate = RNA(n+1) + diphosphate. Its function is as follows. DNA-dependent RNA polymerase catalyzes the transcription of DNA into RNA using the four ribonucleoside triphosphates as substrates. This chain is DNA-directed RNA polymerase subunit beta, found in Rhizobium rhizogenes (strain K84 / ATCC BAA-868) (Agrobacterium radiobacter).